A 290-amino-acid polypeptide reads, in one-letter code: Urease accessory protein UreD (290 aa).

It belongs to the UreD family. As to quaternary structure, ureD, UreF and UreG form a complex that acts as a GTP-hydrolysis-dependent molecular chaperone, activating the urease apoprotein by helping to assemble the nickel containing metallocenter of UreC. The UreE protein probably delivers the nickel.

The protein localises to the cytoplasm. In terms of biological role, required for maturation of urease via the functional incorporation of the urease nickel metallocenter. The chain is Urease accessory protein UreD from Paenarthrobacter aurescens (strain TC1).